The chain runs to 307 residues: G-protein coupled receptor 35 (307 aa).

The Extracellular portion of the chain corresponds to 1-18 (MNSTTCNSTLTWPASVNN). Residues asparagine 2 and asparagine 7 are each glycosylated (N-linked (GlcNAc...) asparagine). The helical transmembrane segment at 19 to 39 (FFIIYSALLLVLGLLLNSVAL) threads the bilayer. Residues 40-53 (WVFCYRMHQWTETR) lie on the Cytoplasmic side of the membrane. Residues 54–74 (IYMTNLAVADLCLLCSLPFVL) traverse the membrane as a helical segment. Residues 75–88 (YSLKYSSSDTPVCQ) lie on the Extracellular side of the membrane. A disulfide bond links cysteine 87 and cysteine 160. The helical transmembrane segment at 89–110 (LSQGIYLANRYMSISLVTAIAV) threads the bilayer. Topologically, residues 111-129 (DRYVAVRHPLRARELRSPR) are cytoplasmic. Residues 130-150 (QAAAVCVALWVIVVTSLVVRW) traverse the membrane as a helical segment. Residues 151–176 (RLGMQEGGFCFSSQTRRNFSTTAFSL) lie on the Extracellular side of the membrane. Residues 177-197 (LGFYLPLAIVVFCSLQVVTVL) form a helical membrane-spanning segment. Residues 198–217 (SRRPAADVGQAEATQKATHM) are Cytoplasmic-facing. The helical transmembrane segment at 218 to 238 (VWANLAVFVICFLPLHVVLTV) threads the bilayer. Residues 239-257 (QVSLNLNTCAARDTFSRAL) are Extracellular-facing. The chain crosses the membrane as a helical span at residues 258 to 278 (SITGKLSDTNCCLDAICYYYM). The Cytoplasmic portion of the chain corresponds to 279–307 (AREFQEASKPATSSNTPHKSQDSQILSLT). 4 positions are modified to phosphoserine: serine 286, serine 292, serine 298, and serine 301. A disordered region spans residues 288–307 (PATSSNTPHKSQDSQILSLT).

Belongs to the G-protein coupled receptor 1 family. Post-translationally, multiply phosphorylated in clusters of serines and threonines in the C-terminal tail. Phosphorylation of Ser-298 and Ser-301 is mediated by GRK5 and/or GRK6. In terms of tissue distribution, predominantly expressed in immune and gastrointestinal tissues. Strongly GPR35 expressed in colonic macrophages.

It localises to the cell membrane. G-protein coupled receptor that binds to several ligands including the tryptophan metabolite kynurenic acid (KYNA), lysophosphatidic acid (LPA) or 5-hydroxyindoleacetic acid (5-HIAA) with high affinity, leading to rapid and transient activation of numerous intracellular signaling pathways. Plays a role in neutrophil recruitment to sites of inflammation and bacterial clearance through the major serotonin metabolite 5-HIAA that acts as a physiological ligand. Stimulates lipid metabolism, thermogenic, and anti-inflammatory gene expression in adipose tissue once activated by kynurenic acid. In macrophages, activation by lysophosphatidic acid promotes GPR35-induced signaling with a distinct transcriptional profile characterized by TNF production associated with ERK and NF-kappa-B activation. In turn, induces chemotaxis of macrophages. This is G-protein coupled receptor 35 (Gpr35) from Mus musculus (Mouse).